A 139-amino-acid polypeptide reads, in one-letter code: Gastrula zinc finger protein XlCGF29.1 (139 aa).

5 C2H2-type zinc fingers span residues 6–28, 34–56, 62–84, 90–112, and 117–139; these read FTCT…LLIH, FDST…LSTH, FVCT…LHSH, FPCS…LRHH, and FPCT…QMIH.

It belongs to the krueppel C2H2-type zinc-finger protein family.

It localises to the nucleus. Functionally, may be involved in transcriptional regulation. The chain is Gastrula zinc finger protein XlCGF29.1 from Xenopus laevis (African clawed frog).